Consider the following 65-residue polypeptide: uncharacterized protein (65 aa).

This is an uncharacterized protein from Saccharolobus islandicus (Sulfolobus islandicus).